Reading from the N-terminus, the 204-residue chain is ATP synthase subunit 4, mitochondrial (204 aa).

A run of 2 helical transmembrane segments spans residues 27–47 (GILATTAAASVYAISSELYVV) and 52–72 (ILLVTFLGFIALISKTVAPLY).

As to quaternary structure, F-type ATP synthases have 2 components, the catalytic core F(1) and the membrane-embedded component F(0), linked together by a central stalk and a peripheral stalk. The central stalk, also called rotor shaft, is often seen as part of F(1). The peripheral stalk is seen as part of F(0). F(0) contains the membrane channel next to the rotor. F-type ATP synthases form dimers but each monomer functions independently in ATP generation. The dimer consists of 18 different polypeptides: ATP1 (subunit alpha, part of F(1), 3 molecules per monomer), ATP2 (subunit beta, part of F(1), 3 molecules per monomer), ATP3 (subunit gamma, part of the central stalk), ATP4 (subunit b, part of the peripheral stalk), ATP5/OSCP (subunit 5/OSCP, part of the peripheral stalk), ATP6 (subunit a, part of the peripheral stalk), ATP7 (subunit d, part of the peripheral stalk), ATP8 (subunit 8, part of the peripheral stalk), OLI1 (subunit c, part of the rotor, 10 molecules per monomer), ATP14 (subunit h, part of the peripheral stalk), ATP15 (subunit epsilon, part of the central stalk), ATP16 (subunit delta, part of the central stalk), ATP17 (subunit f, part of the peripheral stalk), ATP18 (subunit i/j, part of the peripheral stalk). Dimer-specific subunits are ATP19 (subunit k, at interface between monomers), ATP20 (subunit g, at interface between monomers), TIM11 (subunit e, at interface between monomers). Also contains subunit L.

It localises to the mitochondrion inner membrane. Its function is as follows. Mitochondrial membrane ATP synthase (F(1)F(0) ATP synthase or Complex V) produces ATP from ADP in the presence of a proton gradient across the membrane which is generated by electron transport complexes of the respiratory chain. F-type ATP synthases consist of two structural domains, F(1) - containing the extramembraneous catalytic core, and F(0) - containing the membrane proton channel, linked together by a central stalk and a peripheral stalk. During catalysis, ATP synthesis in the catalytic domain of F(1) is coupled via a rotary mechanism of the central stalk subunits to proton translocation. Part of the complex F(0) domain and the peripheral stalk, which acts as a stator to hold the catalytic alpha/ATP1(3)beta/ATP2(3) subcomplex and subunit a/ATP6 static relative to the rotary elements. This Pichia angusta (Yeast) protein is ATP synthase subunit 4, mitochondrial.